A 302-amino-acid polypeptide reads, in one-letter code: Nucleotide-binding protein Bamb_2855 (302 aa).

Position 8–15 (8–15 (GISGSGKS)) interacts with ATP. 57–60 (DARS) contacts GTP.

This sequence belongs to the RapZ-like family.

Its function is as follows. Displays ATPase and GTPase activities. This is Nucleotide-binding protein Bamb_2855 from Burkholderia ambifaria (strain ATCC BAA-244 / DSM 16087 / CCUG 44356 / LMG 19182 / AMMD) (Burkholderia cepacia (strain AMMD)).